A 114-amino-acid chain; its full sequence is DIVMTQSPTFLAVTASKKVTISCTASESLYSSKHKVHYLAWYQKKPEQSPKLLIYGASNRYIGVPDRFTGSGSGTDFTLTISSVQVEDLTHYYCAQFYSYPLTFGAGTKLELKR.

The tract at residues 1–23 (DIVMTQSPTFLAVTASKKVTISC) is framework-1. A disulfide bridge connects residues Cys-23 and Cys-94. Residues 24–40 (TASESLYSSKHKVHYLA) form a complementarity-determining-1 region. Residues 41–55 (WYQKKPEQSPKLLIY) form a framework-2 region. Positions 56–62 (GASNRYI) are complementarity-determining-2. Positions 63-94 (GVPDRFTGSGSGTDFTLTISSVQVEDLTHYYC) are framework-3. Residues 95–103 (AQFYSYPLT) are complementarity-determining-3. The tract at residues 104–113 (FGAGTKLELK) is framework-4.

Functionally, anti-phosphocholine antibody. This is Ig kappa chain V-I region S107A (Igkv7-33) from Mus musculus (Mouse).